The chain runs to 322 residues: Agmatinase (322 aa).

Mn(2+) is bound by residues histidine 136, aspartate 160, histidine 162, aspartate 164, aspartate 243, and aspartate 245.

It belongs to the arginase family. Agmatinase subfamily. Mn(2+) is required as a cofactor.

The enzyme catalyses agmatine + H2O = urea + putrescine. It functions in the pathway amine and polyamine biosynthesis; putrescine biosynthesis via agmatine pathway; putrescine from agmatine: step 1/1. In terms of biological role, catalyzes the formation of putrescine from agmatine. This Chromobacterium violaceum (strain ATCC 12472 / DSM 30191 / JCM 1249 / CCUG 213 / NBRC 12614 / NCIMB 9131 / NCTC 9757 / MK) protein is Agmatinase.